We begin with the raw amino-acid sequence, 830 residues long: Beta-glucosidase A (830 aa).

The active site involves aspartate 769.

It belongs to the glycosyl hydrolase 3 family.

It carries out the reaction Hydrolysis of terminal, non-reducing beta-D-glucosyl residues with release of beta-D-glucose.. In terms of biological role, b.fibrisolvens beta-glucosidase hydrolyzes cellobiose to a limited extent, cellotriose to cellobiose and glucose, and cellotetraose and cellopentaose to predominantly glucose. The chain is Beta-glucosidase A (bglA) from Butyrivibrio fibrisolvens.